A 58-amino-acid polypeptide reads, in one-letter code: Small integral membrane protein 11 (58 aa).

Residues 10-32 (PLLLYILAAKTLILCLTFAGVKM) traverse the membrane as a helical segment. Positions 29–58 (GVKMYQRKRLEAKQQKLEAERKKQSEKKDN) form a coiled coil.

As to expression, expressed in heart, spleen, liver, stomach, muscle, lung, testis, skin, PBL and bone marrow.

The protein localises to the membrane. In Homo sapiens (Human), this protein is Small integral membrane protein 11.